We begin with the raw amino-acid sequence, 315 residues long: N-acetyl-D-glutamate racemase (315 aa).

Mg(2+) is bound by residues D147, E173, and D196.

It belongs to the mandelate racemase/muconate lactonizing enzyme family. Mg(2+) is required as a cofactor.

The catalysed reaction is N-acetyl-D-glutamate = N-acetyl-L-glutamate. It functions in the pathway amino-acid degradation. In terms of biological role, racemase involved in a deamination-independent D-glutamate degradation pathway, named the DgcN-DgcA pathway. Catalyzes the conversion of N-acetyl-D-glutamate to N-acetyl-L-glutamate. Also shows racemase activity towards the dipeptide L-Ala-D-Glu, a key constituent of peptidoglycan muropeptides, suggesting that it may also contribute to the degradation of peptidoglycans. This Pseudoalteromonas sp protein is N-acetyl-D-glutamate racemase.